We begin with the raw amino-acid sequence, 233 residues long: MAKIAKRLKELSQKIDSNKEYALSDAIDTIKTLKSAKFDETVEIALKLNVDPRHADQMVRGSVVLPAGTGKKVRVAVIAKDAKADEAKNAGADIVGSDDLVEEIQKGNMNFDVLIATPNLMGLVGKVGRILGPKGLMPNPKTGTVTMDVAQAVNNAKSGQVNFRVDKQGNIHAGLGKVSFSKEQLWDNVSTFVKAINKHKPAAAKGRYIKNAALSLTMSPSVKLETQELLDMK.

Belongs to the universal ribosomal protein uL1 family. In terms of assembly, part of the 50S ribosomal subunit.

Binds directly to 23S rRNA. The L1 stalk is quite mobile in the ribosome, and is involved in E site tRNA release. Its function is as follows. Protein L1 is also a translational repressor protein, it controls the translation of the L11 operon by binding to its mRNA. The polypeptide is Large ribosomal subunit protein uL1 (Campylobacter jejuni subsp. doylei (strain ATCC BAA-1458 / RM4099 / 269.97)).